We begin with the raw amino-acid sequence, 222 residues long: uncharacterized protein (222 aa).

Positions 1 to 27 (MSFTRRKFVLGMGTVIFFTGSASSLLA) form a signal peptide, tat-type signal. 4Fe-4S ferredoxin-type domains follow at residues 37–66 (YAMIHDESRCNGCNICARACRKTNHAPAQG), 83–114 (TQYHFFRQSCQHCEDAPCIDVCPTGASWRDEQ), and 115–144 (GIVRVEKSQCIGCSYCIGACPYQVRYLNPV). C46, C49, C52, C56, C92, C95, C100, C104, C124, C127, C130, C134, C151, C154, C167, and C171 together coordinate [4Fe-4S] cluster.

Predicted to be exported by the Tat system. The position of the signal peptide cleavage has not been experimentally proven.

This is an uncharacterized protein from Escherichia coli O157:H7.